A 562-amino-acid polypeptide reads, in one-letter code: Urocanate hydratase (562 aa).

Residues 52-53, Q130, 176-178, E196, R201, 242-243, 263-267, 273-274, and Y322 each bind NAD(+); these read GG, GMG, NA, QTSAH, and YL. Residue C410 is part of the active site. G492 contributes to the NAD(+) binding site.

It belongs to the urocanase family. NAD(+) is required as a cofactor.

Its subcellular location is the cytoplasm. It catalyses the reaction 4-imidazolone-5-propanoate = trans-urocanate + H2O. Its pathway is amino-acid degradation; L-histidine degradation into L-glutamate; N-formimidoyl-L-glutamate from L-histidine: step 2/3. Functionally, catalyzes the conversion of urocanate to 4-imidazolone-5-propionate. The chain is Urocanate hydratase from Klebsiella pneumoniae subsp. pneumoniae (strain ATCC 700721 / MGH 78578).